A 191-amino-acid polypeptide reads, in one-letter code: Adenylate kinase (191 aa).

11–16 (GSGKGT) contacts ATP. The segment at 31-60 (STGEILRREIKDKTELGKIAEEYINQGQLL) is NMP. AMP-binding positions include Thr32, Arg37, 58 to 60 (QLL), 86 to 89 (GFPR), and Gln93. Residues 127–137 (KRGKLFSRKDD) form an LID region. Arg128 contributes to the ATP binding site. Arg134 and Arg145 together coordinate AMP. Position 173 (Asn173) interacts with ATP.

This sequence belongs to the adenylate kinase family. In terms of assembly, monomer.

Its subcellular location is the cytoplasm. It catalyses the reaction AMP + ATP = 2 ADP. It participates in purine metabolism; AMP biosynthesis via salvage pathway; AMP from ADP: step 1/1. Catalyzes the reversible transfer of the terminal phosphate group between ATP and AMP. Plays an important role in cellular energy homeostasis and in adenine nucleotide metabolism. The chain is Adenylate kinase from Azobacteroides pseudotrichonymphae genomovar. CFP2.